The chain runs to 807 residues: ATP-binding cassette sub-family F member 1 (807 aa).

The disordered stretch occupies residues 1–227; sequence MPKGPKQQPP…KEKAKKAEQM (227 aa). Residue S22 is modified to Phosphoserine. Residues 29 to 39 show a composition bias toward basic residues; sequence KKGKKDKKTKK. A compositionally biased stretch (basic and acidic residues) spans 47–65; sequence VEDRQAGEEEKVLKEKEQQ. A compositionally biased stretch (basic residues) spans 73-85; the sequence is QKKKRDTRKGRRK. A Phosphoserine modification is found at S106. Phosphoserine; by CK2 is present on residues S110 and S141. Residues 148 to 161 show a composition bias toward basic and acidic residues; that stretch reads EKHPPKPAKPEKNR. A Phosphoserine modification is found at S167. The span at 197–207 shows a compositional bias: acidic residues; the sequence is LDDEEEQDEEE. Residues 208–227 are compositionally biased toward basic and acidic residues; it reads IKEKEPPKQGKEKAKKAEQM. Positions 266–510 constitute an ABC transporter 1 domain; the sequence is IKLEKFSISA…MYQQKQKELL (245 aa). 298 to 305 serves as a coordination point for ATP; sequence GPNGKGKT. A compositionally biased stretch (basic and acidic residues) spans 521–542; it reads KELKAGGKSTKQAEKQTKEALT. The interval 521 to 564 is disordered; sequence KELKAGGKSTKQAEKQTKEALTRKQQKCRRKNQDEESQEAPELL. The residue at position 557 (S557) is a Phosphoserine. The ABC transporter 2 domain occupies 587 to 802; that stretch reads LGLHGVTFGY…VLEALGEVMV (216 aa). ATP is bound at residue 620–627; it reads GPNGVGKS.

Belongs to the ABC transporter superfamily. ABCF family. EF3 subfamily. As to quaternary structure, interacts (via N-terminus) with EIF2S1; the interaction is independent of its phosphorylated status. Associates (via both ABC transporter domains) with the ribosomes. Phosphorylated at phosphoserine and phosphothreonine. Phosphorylation on Ser-110 and Ser-141 by CK2; inhibits association of EIF2 with ribosomes.

Its subcellular location is the cytoplasm. The protein localises to the nucleus. It is found in the nucleoplasm. It localises to the nucleus envelope. In terms of biological role, required for efficient Cap- and IRES-mediated mRNA translation initiation. Not involved in the ribosome biogenesis. This is ATP-binding cassette sub-family F member 1 (ABCF1) from Sus scrofa (Pig).